The following is a 358-amino-acid chain: UDP-N-acetylglucosamine--N-acetylmuramyl-(pentapeptide) pyrophosphoryl-undecaprenol N-acetylglucosamine transferase (358 aa).

Residues 11–13, N122, R161, S189, I243, 262–267, and Q288 each bind UDP-N-acetyl-alpha-D-glucosamine; these read TGG and ALTVCE.

This sequence belongs to the glycosyltransferase 28 family. MurG subfamily.

Its subcellular location is the cell inner membrane. It catalyses the reaction di-trans,octa-cis-undecaprenyl diphospho-N-acetyl-alpha-D-muramoyl-L-alanyl-D-glutamyl-meso-2,6-diaminopimeloyl-D-alanyl-D-alanine + UDP-N-acetyl-alpha-D-glucosamine = di-trans,octa-cis-undecaprenyl diphospho-[N-acetyl-alpha-D-glucosaminyl-(1-&gt;4)]-N-acetyl-alpha-D-muramoyl-L-alanyl-D-glutamyl-meso-2,6-diaminopimeloyl-D-alanyl-D-alanine + UDP + H(+). It participates in cell wall biogenesis; peptidoglycan biosynthesis. Functionally, cell wall formation. Catalyzes the transfer of a GlcNAc subunit on undecaprenyl-pyrophosphoryl-MurNAc-pentapeptide (lipid intermediate I) to form undecaprenyl-pyrophosphoryl-MurNAc-(pentapeptide)GlcNAc (lipid intermediate II). This Coxiella burnetii (strain Dugway 5J108-111) protein is UDP-N-acetylglucosamine--N-acetylmuramyl-(pentapeptide) pyrophosphoryl-undecaprenol N-acetylglucosamine transferase.